The sequence spans 277 residues: MALKHFNPTTSGQRQLVIVDRSGLYKGKPVKTLTEGLLSKGGRNNSGKITARFQGGRHKRSYRFIDFKRLKLDVSAKVERLEYDPNRTAFIALIRYEDGQLSYILAPQRLDVGDTVVAGLSVDVKPGNAMPLGNMPVGAIVHNVEMKPGKGGQIARSAGAYAQLVGRDQGMAILRLNSGEQRLVSSNCFATVGAVSNPDHGNINDGKAGRSRWRGKRPHVRGVAMNPVDHPHGGGEGRTSGGRHPVSPWGKPTKGKRTRSNKATDKFIMRSRHQRKK.

The segment at 222 to 277 is disordered; that stretch reads GVAMNPVDHPHGGGEGRTSGGRHPVSPWGKPTKGKRTRSNKATDKFIMRSRHQRKK.

It belongs to the universal ribosomal protein uL2 family. As to quaternary structure, part of the 50S ribosomal subunit. Forms a bridge to the 30S subunit in the 70S ribosome.

Functionally, one of the primary rRNA binding proteins. Required for association of the 30S and 50S subunits to form the 70S ribosome, for tRNA binding and peptide bond formation. It has been suggested to have peptidyltransferase activity; this is somewhat controversial. Makes several contacts with the 16S rRNA in the 70S ribosome. The polypeptide is Large ribosomal subunit protein uL2 (Bartonella bacilliformis (strain ATCC 35685 / KC583 / Herrer 020/F12,63)).